The chain runs to 174 residues: Nucleoside-triphosphatase THEP1 (174 aa).

ATP-binding positions include 7–14 and 94–101; these read GRPGVGKT and LIIVDEIG.

Belongs to the THEP1 NTPase family.

It carries out the reaction a ribonucleoside 5'-triphosphate + H2O = a ribonucleoside 5'-diphosphate + phosphate + H(+). In terms of biological role, has nucleotide phosphatase activity towards ATP, GTP, CTP, TTP and UTP. May hydrolyze nucleoside diphosphates with lower efficiency. This chain is Nucleoside-triphosphatase THEP1, found in Thermotoga maritima (strain ATCC 43589 / DSM 3109 / JCM 10099 / NBRC 100826 / MSB8).